Here is a 318-residue protein sequence, read N- to C-terminus: Basic leucine zipper (bZIP) transcription factor atfB (318 aa).

Disordered stretches follow at residues 79 to 100 (LKNT…KKLQ) and 114 to 164 (FNSS…EKRE). The basic motif stretch occupies residues 160–199 (REKREKFLERNRLAASKCRQKKKEHTKLLETRFREVSSKK). One can recognise a bZIP domain in the interval 160–223 (REKREKFLER…LNLKNEMLRH (64 aa)). Residues 202–216 (LESEIEHLRSEVLNL) are leucine-zipper. Residues 247–304 (TPNRDLVSPMRSPEQMTASTPHGLSFGFDGPMQLPSEMGSPLDQRRDSEQSIMTESSY) are disordered.

Belongs to the bZIP family. ATF subfamily.

Its subcellular location is the nucleus. Functionally, transcription factor that acts as a key player in the regulatory circuit that integrates secondary metabolism and cellular response to oxidative stress. Regulates the genes involved in development, stress response, and secondary metabolism through direct binding to their promoters. Particularly involved in the resistance to oxidative stress in asexual conidiospores. Binds aflatoxin gene promoters carrying the cAMP-response element (CRE1) under aflatoxin-inducing conditions. The polypeptide is Basic leucine zipper (bZIP) transcription factor atfB (Aspergillus parasiticus (strain ATCC 56775 / NRRL 5862 / SRRC 143 / SU-1)).